Consider the following 76-residue polypeptide: Translational regulator CsrA (76 aa).

Belongs to the CsrA/RsmA family. As to quaternary structure, homodimer; the beta-strands of each monomer intercalate to form a hydrophobic core, while the alpha-helices form wings that extend away from the core.

It is found in the cytoplasm. In terms of biological role, a translational regulator that binds mRNA to regulate translation initiation and/or mRNA stability. Usually binds in the 5'-UTR at or near the Shine-Dalgarno sequence preventing ribosome-binding, thus repressing translation. Its main target seems to be the major flagellin gene, while its function is anatagonized by FliW. This chain is Translational regulator CsrA, found in Helicobacter pylori (strain P12).